A 427-amino-acid polypeptide reads, in one-letter code: Serine protease inhibitor 88Ea (427 aa).

The signal sequence occupies residues 1–18; the sequence is MHILSISLMAVLPAIALA. The N-linked (GlcNAc...) asparagine glycan is linked to N224.

Belongs to the serpin family. Expressed in nurse cells and oocytes. Expressed in wings.

It localises to the secreted. Functionally, serine protease inhibitor with activity toward trypsin. Negatively regulates the Toll signaling pathway and suppresses the expression of the antifungal peptide drosomycin. Its negative regulation of the Toll signaling pathway also results in the inhibition of the melanization immune response via the phenoloxidase (PPO1) cascade. Essential for unfolding and expansion of the wings after emergence from the pupal case. May regulate the Toll pathway by blocking the proteolysis of the Toll ligand spz. The sequence is that of Serine protease inhibitor 88Ea from Drosophila melanogaster (Fruit fly).